The primary structure comprises 21 residues: LRDYANRVINGGPVEAAGPPA.

The interval 1-21 (LRDYANRVINGGPVEAAGPPA) is disordered.

As to expression, expressed by the venom gland.

The protein resides in the secreted. In terms of biological role, inhibits angiotensin-converting enzyme (ACE), but does not serve as substrate for the enzyme. Potentiate bradykinin (BK) on the isolated guinea pig ileum as well as the isolated rat uterus for contraction. Also potentiates in vivo the depressor effect of BK on arterial blood pressure in the normotensive anesthetized rat. Intracerebroventricular injection into mice does not show toxic activity. The protein is Bradykinin-potentiating peptide K12 of Buthus occitanus (Common European scorpion).